Here is a 197-residue protein sequence, read N- to C-terminus: MRWIGVLVTALVLSACAANPPANTTSPTAGQSLDCTKPATIVQQLVCHDRQLTSLDHRLSTAYQQALAHRRSAALEAAQSSWTMLRDACAQDTDPRTCVQEAYQTRLVQLAIADPATATPPVLTYRCPTQDGPLTAQFYNQFDPKTAVLNWKGDQVIVFVELSGSGARYGRQGIEYWEHQGEVRLDFHGATFVCRTS.

The first 15 residues, M1–A15, serve as a signal peptide directing secretion. C16 is lipidated: N-palmitoyl cysteine. A lipid anchor (S-diacylglycerol cysteine) is attached at C16.

In the C-terminal section; belongs to the MliC family. As to quaternary structure, probably a homodimer. In terms of processing, glycosylated.

The protein resides in the cell membrane. The protein localises to the secreted. It is found in the cell wall. It localises to the cell surface. In terms of biological role, strongly binds and inhibits lysozyme, may help bacteria survive in lysozyme-producing host cells such as monocyte-derived macrophages. The protein is Lipoprotein LprI (lprI) of Mycobacterium bovis (strain ATCC BAA-935 / AF2122/97).